The primary structure comprises 120 residues: Large ribosomal subunit protein uL18 (120 aa).

The protein belongs to the universal ribosomal protein uL18 family. Part of the 50S ribosomal subunit; part of the 5S rRNA/L5/L18/L25 subcomplex. Contacts the 5S and 23S rRNAs.

Its function is as follows. This is one of the proteins that bind and probably mediate the attachment of the 5S RNA into the large ribosomal subunit, where it forms part of the central protuberance. This is Large ribosomal subunit protein uL18 from Afipia carboxidovorans (strain ATCC 49405 / DSM 1227 / KCTC 32145 / OM5) (Oligotropha carboxidovorans).